Reading from the N-terminus, the 381-residue chain is Lipid-A-disaccharide synthase (381 aa).

The protein belongs to the LpxB family.

It carries out the reaction a lipid X + a UDP-2-N,3-O-bis[(3R)-3-hydroxyacyl]-alpha-D-glucosamine = a lipid A disaccharide + UDP + H(+). The protein operates within bacterial outer membrane biogenesis; LPS lipid A biosynthesis. In terms of biological role, condensation of UDP-2,3-diacylglucosamine and 2,3-diacylglucosamine-1-phosphate to form lipid A disaccharide, a precursor of lipid A, a phosphorylated glycolipid that anchors the lipopolysaccharide to the outer membrane of the cell. The protein is Lipid-A-disaccharide synthase of Rickettsia bellii (strain OSU 85-389).